We begin with the raw amino-acid sequence, 234 residues long: Sugar fermentation stimulation protein homolog (234 aa).

It belongs to the SfsA family.

The protein is Sugar fermentation stimulation protein homolog of Shewanella baltica (strain OS223).